The chain runs to 1099 residues: R3H domain-containing protein 1 (1099 aa).

Positions 111 to 146 (SFEKEEKPSKDEAEKEKASDKLPRKMLSRDSSQEYT) are disordered. The span at 112–142 (FEKEEKPSKDEAEKEKASDKLPRKMLSRDSS) shows a compositional bias: basic and acidic residues. Residues 168-231 (RMMLLKLEQE…SVIVNKTSNT (64 aa)) enclose the R3H domain. A phosphoserine mark is found at Ser187 and Ser262. Positions 232–302 (RIPDQKFNEH…ARDRIFSQDS (71 aa)) constitute an SUZ domain. The disordered stretch occupies residues 267 to 287 (DNQMRIRLKDDRRSKSIEERE). Ser302 carries the post-translational modification Phosphoserine. Positions 331–370 (RVNKDASGRSTNSHQSSTENELKYSEPRPWSSTDSDSSLR) are disordered. Composition is skewed to polar residues over residues 338-349 (GRSTNSHQSSTE) and 360-370 (WSSTDSDSSLR). Residues Ser380, Ser381, and Ser393 each carry the phosphoserine modification. 4 disordered regions span residues 387–439 (VLTR…SSHG), 490–537 (QTGQ…AANH), 583–625 (YIMT…HPVS), and 797–825 (EQVQFPRTTSPCSSQQLQGHQCTAGPPPP). A compositionally biased stretch (low complexity) spans 391 to 422 (GDSSGSSKSIGRLSKTGSESSGSVGSSTGSLS). Pro residues-rich tracts occupy residues 519-532 (PGPPQPPLPAPPQQ) and 588-611 (APPPHPPPPPPPPPPPPPLPPGQP). Residues 797-817 (EQVQFPRTTSPCSSQQLQGHQ) show a composition bias toward polar residues. Arg929 carries the post-translational modification Asymmetric dimethylarginine; alternate. Position 929 is an omega-N-methylarginine; alternate (Arg929). The tract at residues 941 to 977 (PPAVLHGHIPNQQGQPGSRHGNRGRRQAKKAASTDLG) is disordered. The span at 960–969 (HGNRGRRQAK) shows a compositional bias: basic residues. Ser973 carries the phosphoserine modification.

In Homo sapiens (Human), this protein is R3H domain-containing protein 1 (R3HDM1).